Reading from the N-terminus, the 435-residue chain is Actin-like protein 7A (435 aa).

Residues 1 to 64 (MWAPPAAIMG…TESKAAKERP (64 aa)) form a disordered region. Residues 20 to 31 (QAPLQTQALQTA) are compositionally biased toward low complexity. Positions 31–51 (ASLRDGPAKRAVWVRHTSSEP) are required for interaction with TES. Basic and acidic residues predominate over residues 55–64 (TESKAAKERP).

Belongs to the actin family. In terms of assembly, interacts (via N-terminus) with TES (via LIM domain 2). Heterodimer with TES; the heterodimer interacts with ENAH to form a heterotrimer. Interacts with ACTL9. Interacts with CYLC1; the interaction may be relevant for proper acrosome attachment to the nuclear envelope. As to expression, strongly expressed in testis. Also expressed in other tissues.

It localises to the cytoplasm. The protein localises to the cytoskeleton. The protein resides in the golgi apparatus. Its subcellular location is the nucleus. It is found in the cytoplasmic vesicle. It localises to the secretory vesicle. The protein localises to the acrosome. Essential for normal spermatogenesis and male fertility. Required for normal sperm head morphology, acroplaxome formation, acrosome attachment, and acrosome granule stability. May anchor and stabilize acrosomal adherence to the acroplaxome at least in part by facilitating the presence of F-actin in the subacrosomal space. May play an important role in formation and fusion of Golgi-derived vesicles during acrosome biogenesis. The protein is Actin-like protein 7A (ACTL7A) of Homo sapiens (Human).